Consider the following 153-residue polypeptide: 6,7-dimethyl-8-ribityllumazine synthase (153 aa).

Residues Phe22, 56–58, and 80–82 each bind 5-amino-6-(D-ribitylamino)uracil; these read AFE and TVI. 85-86 contacts (2S)-2-hydroxy-3-oxobutyl phosphate; it reads ST. His88 serves as the catalytic Proton donor. Position 113 (Phe113) interacts with 5-amino-6-(D-ribitylamino)uracil. Residue Arg127 coordinates (2S)-2-hydroxy-3-oxobutyl phosphate.

It belongs to the DMRL synthase family. In terms of assembly, forms an icosahedral capsid composed of 60 subunits, arranged as a dodecamer of pentamers.

The enzyme catalyses (2S)-2-hydroxy-3-oxobutyl phosphate + 5-amino-6-(D-ribitylamino)uracil = 6,7-dimethyl-8-(1-D-ribityl)lumazine + phosphate + 2 H2O + H(+). The protein operates within cofactor biosynthesis; riboflavin biosynthesis; riboflavin from 2-hydroxy-3-oxobutyl phosphate and 5-amino-6-(D-ribitylamino)uracil: step 1/2. Functionally, catalyzes the formation of 6,7-dimethyl-8-ribityllumazine by condensation of 5-amino-6-(D-ribitylamino)uracil with 3,4-dihydroxy-2-butanone 4-phosphate. This is the penultimate step in the biosynthesis of riboflavin. The protein is 6,7-dimethyl-8-ribityllumazine synthase of Actinobacillus pleuropneumoniae serotype 7 (strain AP76).